The following is a 524-amino-acid chain: MTAPDTDREEFVSLAGDADGPVVTHLVADLDVSVDPLAAYTTLADRSDYGFLLESAEKVSSSNPQGAFSAPATAADSHARFSFVGYDPEAVVTVGPDGVDVTDLGGPAAEFVGAGDGDVLDSLRGALPDLPRVNFPETDRQTLTGGLVGFLAYEAVYDLWLDEVGRERPDTDDPDAEFVLTTRTLSFDHREDAVRLVCTPVVSPDDDPGEVYDGVVAEAERVAEKLRAADDPAPGGFERTGEDAGSREEYEAAVRKTKEHVRDGDIYQGVISRTRKLRGQVDPVGLYASLREVNPSPYMFLLRHGDRRVVGASPETLVSVRGDRVVVNPIAGTCQRGSGPVEDRRLAGELLADAKERAEHTMLVDLGRNDVRRVSTPGSVRVEDFMSIIKYSHVQHIESTVSGTLDADADAFDATRATFPAGTLTGAPKVRAMEIIDDLEAEPRGVYGGGVGYYSWTGDADVAIVIRTATVDSGGADDAITVRAGAGIVADSDPTAEYEETEQKMGGVLDAVRRIEYGTEEASQ.

L-tryptophan is bound by residues serine 55 and 297-299; that span reads PYM. 332 to 333 provides a ligand contact to chorismate; it reads GT. Residue glutamate 359 participates in Mg(2+) binding. Residues tyrosine 447, arginine 467, 485 to 487, and glycine 487 contribute to the chorismate site; that span reads GAG. Residue glutamate 500 coordinates Mg(2+).

It belongs to the anthranilate synthase component I family. As to quaternary structure, heterotetramer consisting of two non-identical subunits: a beta subunit (TrpG) and a large alpha subunit (TrpE). It depends on Mg(2+) as a cofactor.

The catalysed reaction is chorismate + L-glutamine = anthranilate + pyruvate + L-glutamate + H(+). It participates in amino-acid biosynthesis; L-tryptophan biosynthesis; L-tryptophan from chorismate: step 1/5. With respect to regulation, feedback inhibited by tryptophan. Part of a heterotetrameric complex that catalyzes the two-step biosynthesis of anthranilate, an intermediate in the biosynthesis of L-tryptophan. In the first step, the glutamine-binding beta subunit (TrpG) of anthranilate synthase (AS) provides the glutamine amidotransferase activity which generates ammonia as a substrate that, along with chorismate, is used in the second step, catalyzed by the large alpha subunit of AS (TrpE) to produce anthranilate. In the absence of TrpG, TrpE can synthesize anthranilate directly from chorismate and high concentrations of ammonia. In Haloferax volcanii (strain ATCC 29605 / DSM 3757 / JCM 8879 / NBRC 14742 / NCIMB 2012 / VKM B-1768 / DS2) (Halobacterium volcanii), this protein is Anthranilate synthase component 1 (trpE).